A 208-amino-acid chain; its full sequence is Guanylate kinase (208 aa).

The 182-residue stretch at 4–185 (GNLYILSAPS…TLKDLQSILQ (182 aa)) folds into the Guanylate kinase-like domain. 11–18 (APSGAGKS) lines the ATP pocket.

Belongs to the guanylate kinase family.

The protein localises to the cytoplasm. The catalysed reaction is GMP + ATP = GDP + ADP. In terms of biological role, essential for recycling GMP and indirectly, cGMP. This Haemophilus influenzae (strain 86-028NP) protein is Guanylate kinase.